The chain runs to 245 residues: Geranylgeranylglyceryl phosphate synthase (245 aa).

Mg(2+)-binding residues include Asp-20 and Ser-50. Sn-glycerol 1-phosphate contacts are provided by residues 169–175 (YLEAGSG), 202–203 (GG), and 224–225 (GT).

This sequence belongs to the GGGP/HepGP synthase family. Group II subfamily. Requires Mg(2+) as cofactor.

Its subcellular location is the cytoplasm. It carries out the reaction sn-glycerol 1-phosphate + (2E,6E,10E)-geranylgeranyl diphosphate = sn-3-O-(geranylgeranyl)glycerol 1-phosphate + diphosphate. It participates in membrane lipid metabolism; glycerophospholipid metabolism. Its function is as follows. Prenyltransferase that catalyzes the transfer of the geranylgeranyl moiety of geranylgeranyl diphosphate (GGPP) to the C3 hydroxyl of sn-glycerol-1-phosphate (G1P). This reaction is the first ether-bond-formation step in the biosynthesis of archaeal membrane lipids. The polypeptide is Geranylgeranylglyceryl phosphate synthase (Ignicoccus hospitalis (strain KIN4/I / DSM 18386 / JCM 14125)).